Consider the following 210-residue polypeptide: Peroxiredoxin-5, mitochondrial (210 aa).

A mitochondrion-targeting transit peptide spans 1 to 48 (MLQLGLRVLGCKASSVLRASTCLAGRAGRKEAGWECGGARSFSSSAVT). Residues 52-210 (IKVGDAIPSV…SLAPNILSQL (159 aa)) enclose the Thioredoxin domain. The residue at position 70 (Lys70) is an N6-acetyllysine; alternate. An N6-succinyllysine; alternate modification is found at Lys70. At Lys71 the chain carries N6-acetyllysine. N6-acetyllysine; alternate is present on Lys79. Residue Lys79 is modified to N6-succinyllysine; alternate. Catalysis depends on Cys96, which acts as the Cysteine sulfenic acid (-SOH) intermediate. Cys96 carries the S-palmitoyl cysteine lipid modification. Cys96 and Cys200 form a disulfide bridge. Residue Lys112 is modified to N6-succinyllysine. 2 positions are modified to phosphoserine: Ser167 and Ser178. A Microbody targeting signal motif is present at residues 208-210 (SQL).

Belongs to the peroxiredoxin family. Prx5 subfamily. As to quaternary structure, monomer. S-palmitoylated. Palmitoylation occurs on the active site, inhibiting its reactivity; therefore PRDX5 palmitoylation status determines its antioxidant capacity. Post-translationally, S-palmitoylated. Depalmitoylated by ABHD10. Widely expressed.

It is found in the mitochondrion. Its subcellular location is the cytoplasm. The protein localises to the peroxisome matrix. It catalyses the reaction a hydroperoxide + [thioredoxin]-dithiol = an alcohol + [thioredoxin]-disulfide + H2O. Its function is as follows. Thiol-specific peroxidase that catalyzes the reduction of hydrogen peroxide and organic hydroperoxides to water and alcohols, respectively. Plays a role in cell protection against oxidative stress by detoxifying peroxides and as sensor of hydrogen peroxide-mediated signaling events. The sequence is that of Peroxiredoxin-5, mitochondrial from Mus musculus (Mouse).